The sequence spans 310 residues: tRNA dimethylallyltransferase (310 aa).

9–16 provides a ligand contact to ATP; that stretch reads GPTAVGKT. 11 to 16 contacts substrate; the sequence is TAVGKT. An interaction with substrate tRNA region spans residues 34-37; sequence DSMQ.

The protein belongs to the IPP transferase family. In terms of assembly, monomer. Mg(2+) is required as a cofactor.

It catalyses the reaction adenosine(37) in tRNA + dimethylallyl diphosphate = N(6)-dimethylallyladenosine(37) in tRNA + diphosphate. Catalyzes the transfer of a dimethylallyl group onto the adenine at position 37 in tRNAs that read codons beginning with uridine, leading to the formation of N6-(dimethylallyl)adenosine (i(6)A). The chain is tRNA dimethylallyltransferase from Syntrophomonas wolfei subsp. wolfei (strain DSM 2245B / Goettingen).